A 314-amino-acid polypeptide reads, in one-letter code: Bifunctional riboflavin kinase/FMN adenylyltransferase (314 aa).

Belongs to the RibF family.

The enzyme catalyses riboflavin + ATP = FMN + ADP + H(+). It catalyses the reaction FMN + ATP + H(+) = FAD + diphosphate. The protein operates within cofactor biosynthesis; FAD biosynthesis; FAD from FMN: step 1/1. Its pathway is cofactor biosynthesis; FMN biosynthesis; FMN from riboflavin (ATP route): step 1/1. Functionally, catalyzes the phosphorylation of riboflavin to FMN followed by the adenylation of FMN to FAD. Can also catalyze the phosphorylation of the toxic riboflavin analogs 8-demethyl-8-aminoriboflavin (AF) to 8-demethyl-8-aminoriboflavin mononucleotide (AFMN) and roseoflavin (RoF) to roseoflavin mononucleotide (RoFMN), and the adenylation of AFMN to 8-demethyl-8-aminoriboflavin adenine dinucleotide (AFAD). In Listeria monocytogenes serovar 1/2a (strain ATCC BAA-679 / EGD-e), this protein is Bifunctional riboflavin kinase/FMN adenylyltransferase.